We begin with the raw amino-acid sequence, 347 residues long: Spermidine/putrescine import ATP-binding protein PotA (347 aa).

An ABC transporter domain is found at 6-236; sequence IELRDISKHY…PKNSFVAKFI (231 aa). 38-45 contacts ATP; it reads GPSGCGKT.

It belongs to the ABC transporter superfamily. Spermidine/putrescine importer (TC 3.A.1.11.1) family. The complex is composed of two ATP-binding proteins (PotA), two transmembrane proteins (PotB and PotC) and a solute-binding protein (PotD).

It is found in the cell membrane. It carries out the reaction ATP + H2O + polyamine-[polyamine-binding protein]Side 1 = ADP + phosphate + polyamineSide 2 + [polyamine-binding protein]Side 1.. Functionally, part of the ABC transporter complex PotABCD involved in spermidine/putrescine import. Responsible for energy coupling to the transport system. The chain is Spermidine/putrescine import ATP-binding protein PotA from Clostridioides difficile (strain 630) (Peptoclostridium difficile).